A 391-amino-acid polypeptide reads, in one-letter code: Digeranylgeranylglycerophospholipid reductase (391 aa).

Residues Gly-13, Glu-32, Cys-43, Ala-44, Gly-46, Arg-97, Ala-121, Asp-277, Gly-289, and Ile-290 each coordinate FAD.

Belongs to the geranylgeranyl reductase family. DGGGPL reductase subfamily. FAD serves as cofactor.

The enzyme catalyses a 2,3-bis-O-phytanyl-sn-glycerol 1-phospholipid + 8 oxidized 2[4Fe-4S]-[ferredoxin] = a 2,3-bis-O-(geranylgeranyl)-sn-glycerol 1-phospholipid + 8 reduced 2[4Fe-4S]-[ferredoxin] + 16 H(+). It catalyses the reaction 2,3-bis-O-(phytanyl)-sn-glycerol 1-phosphate + 8 oxidized 2[4Fe-4S]-[ferredoxin] = 2,3-bis-O-(geranylgeranyl)-sn-glycerol 1-phosphate + 8 reduced 2[4Fe-4S]-[ferredoxin] + 16 H(+). The catalysed reaction is a 2,3-bis-O-phytanyl-sn-glycerol 1-phospholipid + 8 A = a 2,3-bis-O-(geranylgeranyl)-sn-glycerol 1-phospholipid + 8 AH2. It carries out the reaction CDP-2,3-bis-O-(geranylgeranyl)-sn-glycerol + 8 AH2 = CDP-2,3-bis-O-(phytanyl)-sn-glycerol + 8 A. The enzyme catalyses archaetidylserine + 8 AH2 = 2,3-bis-O-phytanyl-sn-glycero-3-phospho-L-serine + 8 A. It functions in the pathway membrane lipid metabolism; glycerophospholipid metabolism. Is involved in the reduction of 2,3-digeranylgeranylglycerophospholipids (unsaturated archaeols) into 2,3-diphytanylglycerophospholipids (saturated archaeols) in the biosynthesis of archaeal membrane lipids. Catalyzes the formation of archaetidic acid (2,3-di-O-phytanyl-sn-glyceryl phosphate) from 2,3-di-O-geranylgeranylglyceryl phosphate (DGGGP) via the hydrogenation of each double bond of the isoprenoid chains. Is also probably able to reduce double bonds of geranyl groups in CDP-2,3-bis-O-(geranylgeranyl)-sn-glycerol and archaetidylserine, thus acting at various stages in the biosynthesis of archaeal membrane lipids. This is Digeranylgeranylglycerophospholipid reductase from Methanothrix thermoacetophila (strain DSM 6194 / JCM 14653 / NBRC 101360 / PT) (Methanosaeta thermophila).